Here is an 84-residue protein sequence, read N- to C-terminus: Large ribosomal subunit protein bL27 (84 aa).

A disordered region spans residues 1–21 (MAHKKGGGSTKNGRDSNPKYL).

Belongs to the bacterial ribosomal protein bL27 family.

This chain is Large ribosomal subunit protein bL27, found in Pelodictyon phaeoclathratiforme (strain DSM 5477 / BU-1).